A 392-amino-acid chain; its full sequence is Proteasome-activating nucleotidase (392 aa).

Residues 19-53 (IVRLLEEKIESLTKELEKLRQDLNWYKGELEKLLA) adopt a coiled-coil conformation. Residues 178–183 (GTGKTL) and tyrosine 317 contribute to the ATP site. The interval 390–392 (KYV) is docks into pockets in the proteasome alpha-ring to cause gate opening.

The protein belongs to the AAA ATPase family. In terms of assembly, homohexamer. The hexameric complex has a two-ring architecture resembling a top hat that caps the 20S proteasome core at one or both ends. Upon ATP-binding, the C-terminus of PAN interacts with the alpha-rings of the proteasome core by binding to the intersubunit pockets.

The protein localises to the cytoplasm. ATPase which is responsible for recognizing, binding, unfolding and translocation of substrate proteins into the archaeal 20S proteasome core particle. Is essential for opening the gate of the 20S proteasome via an interaction with its C-terminus, thereby allowing substrate entry and access to the site of proteolysis. Thus, the C-termini of the proteasomal ATPase function like a 'key in a lock' to induce gate opening and therefore regulate proteolysis. Unfolding activity requires energy from ATP hydrolysis, whereas ATP binding alone promotes ATPase-20S proteasome association which triggers gate opening, and supports translocation of unfolded substrates. The sequence is that of Proteasome-activating nucleotidase from Sulfurisphaera tokodaii (strain DSM 16993 / JCM 10545 / NBRC 100140 / 7) (Sulfolobus tokodaii).